Here is a 183-residue protein sequence, read N- to C-terminus: Large ribosomal subunit protein uL6 (183 aa).

The protein belongs to the universal ribosomal protein uL6 family. As to quaternary structure, part of the 50S ribosomal subunit.

Its function is as follows. This protein binds to the 23S rRNA, and is important in its secondary structure. It is located near the subunit interface in the base of the L7/L12 stalk, and near the tRNA binding site of the peptidyltransferase center. This Ruminiclostridium cellulolyticum (strain ATCC 35319 / DSM 5812 / JCM 6584 / H10) (Clostridium cellulolyticum) protein is Large ribosomal subunit protein uL6.